Here is a 320-residue protein sequence, read N- to C-terminus: MQTRNTFSWIREEITRSISVSLIIYIITRASISSAYPIFAQQNYENPREATGRIVCANCHLASKPVDIEVPQAVLPDTVFEAVVKIPYDMQLKQVLANGKKGALNVGAVLILPEGFELAPPDRISPEMKEKIGNLSFQNYRPNKKNILVIGPVPGQKYSEITFPILAPDPATNKDVHFLKYPIYVGGNRGRGQIYPDGSKSNNTVYNATAGGIISKIVRKEKGGYEITIVDPSNERQVIDIIPRGLELLVSEGESIKLDQPLTSNPNVGGFGQGDAEIVLQDPLRVQGLLFFLASVVLAQIFLVLKKKQFEKVQLSEMNF.

A signal peptide spans 1-35 (MQTRNTFSWIREEITRSISVSLIIYIITRASISSA). Positions 36, 56, 59, and 60 each coordinate heme. A helical transmembrane segment spans residues 286–306 (VQGLLFFLASVVLAQIFLVLK).

This sequence belongs to the cytochrome f family. In terms of assembly, the 4 large subunits of the cytochrome b6-f complex are cytochrome b6, subunit IV (17 kDa polypeptide, petD), cytochrome f and the Rieske protein, while the 4 small subunits are PetG, PetL, PetM and PetN. The complex functions as a dimer. The cofactor is heme.

It is found in the plastid. It localises to the chloroplast thylakoid membrane. Component of the cytochrome b6-f complex, which mediates electron transfer between photosystem II (PSII) and photosystem I (PSI), cyclic electron flow around PSI, and state transitions. In Draba nemorosa (Woodland whitlowgrass), this protein is Cytochrome f.